Here is a 178-residue protein sequence, read N- to C-terminus: Thymidine kinase (178 aa).

Position 13-20 (13-20 (GPMFAGKS)) interacts with ATP. Glu85 acts as the Proton acceptor in catalysis. Residue Phe115 participates in substrate binding. Zn(2+) is bound by residues Cys140 and Cys143. 159 to 163 (IEIIG) provides a ligand contact to substrate. Positions 172 and 175 each coordinate Zn(2+).

It belongs to the thymidine kinase family.

The catalysed reaction is thymidine + ATP = dTMP + ADP + H(+). This chain is Thymidine kinase (TK), found in Myxoma virus (strain Lausanne) (MYXV).